Reading from the N-terminus, the 148-residue chain is Ubiquitin-conjugating enzyme E2-16 kDa (148 aa).

The UBC core domain maps to 2–148; the sequence is SSSKRIAKEL…AKEWTKKYAV (147 aa). The residue at position 12 (serine 12) is a Phosphoserine. Catalysis depends on cysteine 86, which acts as the Glycyl thioester intermediate. A Glycyl lysine isopeptide (Lys-Gly) (interchain with G-Cter in ubiquitin) cross-link involves residue lysine 91.

The protein belongs to the ubiquitin-conjugating enzyme family. As to quaternary structure, component of the RSP5-UBA1-UBC5 ubiquitin ligase complex composed of E3 RSP5, E1 UBA1 and E2 UBC5. In terms of processing, the N-terminus is blocked.

The enzyme catalyses S-ubiquitinyl-[E1 ubiquitin-activating enzyme]-L-cysteine + [E2 ubiquitin-conjugating enzyme]-L-cysteine = [E1 ubiquitin-activating enzyme]-L-cysteine + S-ubiquitinyl-[E2 ubiquitin-conjugating enzyme]-L-cysteine.. It participates in protein modification; protein ubiquitination. Functionally, catalyzes the covalent attachment of ubiquitin to other proteins. Mediates the selective degradation of short-lived and abnormal proteins. The RSP5-UBA1-UBC5 ubiquitin ligase complex ubiquitinates RPO21 forming 'Lys-63'-linked polyubiquitin chains. The protein is Ubiquitin-conjugating enzyme E2-16 kDa (UBC5) of Saccharomyces cerevisiae (strain ATCC 204508 / S288c) (Baker's yeast).